Consider the following 100-residue polypeptide: Aspartyl/glutamyl-tRNA(Asn/Gln) amidotransferase subunit C (100 aa).

It belongs to the GatC family. Heterotrimer of A, B and C subunits.

It carries out the reaction L-glutamyl-tRNA(Gln) + L-glutamine + ATP + H2O = L-glutaminyl-tRNA(Gln) + L-glutamate + ADP + phosphate + H(+). It catalyses the reaction L-aspartyl-tRNA(Asn) + L-glutamine + ATP + H2O = L-asparaginyl-tRNA(Asn) + L-glutamate + ADP + phosphate + 2 H(+). Functionally, allows the formation of correctly charged Asn-tRNA(Asn) or Gln-tRNA(Gln) through the transamidation of misacylated Asp-tRNA(Asn) or Glu-tRNA(Gln) in organisms which lack either or both of asparaginyl-tRNA or glutaminyl-tRNA synthetases. The reaction takes place in the presence of glutamine and ATP through an activated phospho-Asp-tRNA(Asn) or phospho-Glu-tRNA(Gln). In Streptococcus pneumoniae (strain Hungary19A-6), this protein is Aspartyl/glutamyl-tRNA(Asn/Gln) amidotransferase subunit C.